The sequence spans 119 residues: Large ribosomal subunit protein bL20 (119 aa).

Belongs to the bacterial ribosomal protein bL20 family.

Binds directly to 23S ribosomal RNA and is necessary for the in vitro assembly process of the 50S ribosomal subunit. It is not involved in the protein synthesizing functions of that subunit. The sequence is that of Large ribosomal subunit protein bL20 from Streptococcus uberis (strain ATCC BAA-854 / 0140J).